Here is a 287-residue protein sequence, read N- to C-terminus: Putative sugar uptake protein EF_0928 (287 aa).

Transmembrane regions (helical) follow at residues 5–27, 32–49, 53–71, 84–106, 116–134, 155–177, 182–200, 207–229, 234–256, and 265–284; these read IALV…GGSA, LGMT…FFVI, LTTA…WSLG, VSVG…GAVF, FVVG…YLTA, IRAL…ATGL, IILP…FAFK, FVWM…LLTM, LAIS…IFLL, and MFYV…LLGY.

It belongs to the GRP transporter (TC 2.A.7.5) family.

The protein localises to the cell membrane. In Enterococcus faecalis (strain ATCC 700802 / V583), this protein is Putative sugar uptake protein EF_0928.